Reading from the N-terminus, the 201-residue chain is Large ribosomal subunit protein uL4 (201 aa).

The tract at residues 45-72 (AQKTRAEVTGSGKKPWRQKGTGRARAGS) is disordered.

It belongs to the universal ribosomal protein uL4 family. Part of the 50S ribosomal subunit.

Its function is as follows. One of the primary rRNA binding proteins, this protein initially binds near the 5'-end of the 23S rRNA. It is important during the early stages of 50S assembly. It makes multiple contacts with different domains of the 23S rRNA in the assembled 50S subunit and ribosome. Forms part of the polypeptide exit tunnel. This is Large ribosomal subunit protein uL4 from Shewanella frigidimarina (strain NCIMB 400).